The following is a 474-amino-acid chain: UDP-N-acetylmuramoylalanine--D-glutamate ligase (474 aa).

134–140 (GSNGKST) lines the ATP pocket.

The protein belongs to the MurCDEF family.

The protein resides in the cytoplasm. It catalyses the reaction UDP-N-acetyl-alpha-D-muramoyl-L-alanine + D-glutamate + ATP = UDP-N-acetyl-alpha-D-muramoyl-L-alanyl-D-glutamate + ADP + phosphate + H(+). The protein operates within cell wall biogenesis; peptidoglycan biosynthesis. In terms of biological role, cell wall formation. Catalyzes the addition of glutamate to the nucleotide precursor UDP-N-acetylmuramoyl-L-alanine (UMA). In Thiobacillus denitrificans (strain ATCC 25259 / T1), this protein is UDP-N-acetylmuramoylalanine--D-glutamate ligase.